Consider the following 89-residue polypeptide: Small ribosomal subunit protein uS15 (89 aa).

The protein belongs to the universal ribosomal protein uS15 family. Part of the 30S ribosomal subunit. Forms a bridge to the 50S subunit in the 70S ribosome, contacting the 23S rRNA.

Its function is as follows. One of the primary rRNA binding proteins, it binds directly to 16S rRNA where it helps nucleate assembly of the platform of the 30S subunit by binding and bridging several RNA helices of the 16S rRNA. In terms of biological role, forms an intersubunit bridge (bridge B4) with the 23S rRNA of the 50S subunit in the ribosome. This Pseudomonas putida (strain ATCC 700007 / DSM 6899 / JCM 31910 / BCRC 17059 / LMG 24140 / F1) protein is Small ribosomal subunit protein uS15.